An 879-amino-acid polypeptide reads, in one-letter code: MTQEYSTLRNNISMLGRFLGETINDAQGEDILELIENIRKLSRNSRAGDDKARQALLDTLGSISNENIIPVARAFSQFLNLTNIAEQYQTISREHSLAQSSSQSLSELFKRLKEQNASVEEVHKTVEKLLIELVLTAHPTETTRRSLIHKHIEINKCLSKLEHHDLTEKERNIIERLLLRLIAEAWHTNEIRTVRPTPFDEAKWGFAMLENSLWQAVPEFLRQLNETAREFLGYDLPVGLKPVRISSWMGGDRDGNPFVTAQITKKVLYFARWKAADLFLQDISKLADELSMMKCSDEFRDKYGEHLEPYRFVVKNLRNQLTATLAYFDDHLSNRTPRVSESEIILEDNQLWEPLYDCYQSLIQCGMRIIANGSLLDILHRISCFGVTLSQMDIRQESTRHTDAIAEIMRYIGLGDYSQWMEDDKQAFLIRELSSRRPLIPQNWTPSPETKEILDTCKVIAQQKQGVIACYVISMARSASDVLAVHLLLKEAGVPYHIPVVPLFETLEDLDAAEKVMTQLFNVGWYRGVINNRQMVMIGYSDSAKDAGMMAASWAQYRAQEALVNLTEKLGIELTLFHGRGGTIGRGGAPAHAALLSQPPRSLKNGLRVTEQGEMIRFKLGLPAVAVETFDLYASAILEANLLPPPEPKPEWRTIMDELSTISCDIYRGVVRGDKDFVPYFRSATPEQELSKLPLGSRPAKRNPNGGVESLRAIPWIFAWMQNRLMLPAWLGAGAAIRQVIEQGKGDIIHKMCENWPFFSTRIGMLEMVFSKSDTWLSQQYDQRLVKKELWYLGENLRKQLEDDIQTVLSLSHQSELMSDLPWIADSIALRNIYTDPLNLLQVELLHRFRENPEQVNPDVEQALMITITGIAAGMRNTG.

Residues His138 and Lys545 contribute to the active site.

This sequence belongs to the PEPCase type 1 family. Mg(2+) serves as cofactor.

It catalyses the reaction oxaloacetate + phosphate = phosphoenolpyruvate + hydrogencarbonate. In terms of biological role, forms oxaloacetate, a four-carbon dicarboxylic acid source for the tricarboxylic acid cycle. The protein is Phosphoenolpyruvate carboxylase of Haemophilus influenzae (strain 86-028NP).